Here is a 309-residue protein sequence, read N- to C-terminus: MTRTASAPRSVGSARPLKAIYDVPAPAKLNLFLHITGRRADGYHLLQSAFMLIDWCDTLHFELRTDGQISRADLSDPGSPGCGAAEPLPAEDLAVRAARALQAACGTSLGVHIGLEKRIPSQAGMGGGSSDAASCLLALQRLWGVTLPATELRALALSLGADVPFFLSGGHAWVEGIGEKITPIALPAARFVVVKPSAGLSTPAIFSAPELKRDTETATIQGFAANAEGQVFGFGRNDLQPVAQALCPPIGQSLDWLSAQHLQGRMTGSGSAVFALLPHDVDLSDVPGTPGDWKIRKCSNLQAHPLAGW.

Lysine 28 is a catalytic residue. An ATP-binding site is contributed by 120–130 (PSQAGMGGGSS). Aspartate 162 is a catalytic residue.

It belongs to the GHMP kinase family. IspE subfamily.

It carries out the reaction 4-CDP-2-C-methyl-D-erythritol + ATP = 4-CDP-2-C-methyl-D-erythritol 2-phosphate + ADP + H(+). It functions in the pathway isoprenoid biosynthesis; isopentenyl diphosphate biosynthesis via DXP pathway; isopentenyl diphosphate from 1-deoxy-D-xylulose 5-phosphate: step 3/6. Its function is as follows. Catalyzes the phosphorylation of the position 2 hydroxy group of 4-diphosphocytidyl-2C-methyl-D-erythritol. The protein is 4-diphosphocytidyl-2-C-methyl-D-erythritol kinase of Polaromonas sp. (strain JS666 / ATCC BAA-500).